Consider the following 1039-residue polypeptide: Integrin alpha-IIb (1039 aa).

A signal peptide spans 1–31 (MARALCPLQALWLLEWVLLLLGPCAAPPAWA). Topologically, residues 32 to 993 (LNLDPVQLTF…TQLLRALEER (962 aa)) are extracellular. 7 FG-GAP repeats span residues 35–96 (DPVQ…GGQC), 110–173 (VGSQ…RRAE), 187–238 (VEND…FSSY), 251–305 (SLSF…DSYY), 306–371 (QRLH…PHAL), 373–432 (APSL…GLRS), and 435–496 (SQVL…VQDS). N46 is a glycosylation site (N-linked (GlcNAc...) asparagine). Disulfide bonds link C87–C96, C138–C161, and C177–C198. E274, D276, and D278 together coordinate Ca(2+). N-linked (GlcNAc...) asparagine glycosylation is present at N280. Ca(2+)-binding residues include T281, E283, D328, N330, D332, R334, D336, D396, D398, D400, Y402, D404, D457, D459, N461, Y463, and D465. 2 disulfides stabilise this stretch: C504–C515 and C521–C576. The N-linked (GlcNAc...) asparagine glycan is linked to N601. 4 disulfides stabilise this stretch: C633–C639, C705–C718, C857–C921, and C911–C916. The N-linked (GlcNAc...) asparagine glycan is linked to N711. Residue I874 is glycosylated (O-linked (GalNAc...) serine; in variant S-874). O-linked (GalNAc...) serine glycosylation occurs at S878. Q891 carries the post-translational modification Pyrrolidone carboxylic acid; in light chain form 1. N-linked (GlcNAc...) asparagine glycosylation is present at N962. The helical transmembrane segment at 994 to 1019 (AIPIWWVLVGVLGGLLLLTILVLAMW) threads the bilayer. The Cytoplasmic segment spans residues 1020–1039 (KVGFFKRNRPPLEEDDEEGE). The GFFKR motif signature appears at 1022-1026 (GFFKR).

The protein belongs to the integrin alpha chain family. As to quaternary structure, heterodimer of an alpha and a beta subunit. The alpha subunit is composed of a heavy and a light chain linked by a disulfide bond. Alpha-IIb associates with beta-3. Directly interacts with RNF181. Interacts (via C-terminus cytoplasmic tail region) with CIB1; the interaction is direct and calcium-dependent. Interacts (via C-terminus cytoplasmic tail region) with CIB2, CIB3 and CIB4; the interactions are stabilized/increased in a calcium and magnesium-dependent manner. ITGA2B:ITGB3 interacts with PPIA/CYPA; the interaction is ROS and PPIase activity-dependent and is increased in the presence of thrombin. ITGA2B:ITGB3 interacts with SELP (via C-type lectin domain); the interaction mediates cell-cell interaction and adhesion. In terms of processing, cleaved by ELANE; the cleavage promotes activation of platelet fibrinogen receptor integrin alpha-IIb/beta-3. Isoform 1 and isoform 2 are expressed in platelets and megakaryocytes, but not in reticulocytes. Not detected in Jurkat, nor in U937 cell lines. Isoform 3 is expressed in prostate adenocarcinoma, as well as in several erythroleukemia, prostate adenocarcinoma and melanoma cell lines, including PC-3, DU-145, HEL, WM983A, WM983B and WM35. Not detected in platelets, nor in normal prostate (at protein level).

Its subcellular location is the membrane. In terms of biological role, integrin alpha-IIb/beta-3 is a receptor for fibronectin, fibrinogen, plasminogen, prothrombin, thrombospondin and vitronectin. It recognizes the sequence R-G-D in a wide array of ligands. It recognizes the sequence H-H-L-G-G-G-A-K-Q-A-G-D-V in fibrinogen gamma chain. Following activation integrin alpha-IIb/beta-3 brings about platelet/platelet interaction through binding of soluble fibrinogen. This step leads to rapid platelet aggregation which physically plugs ruptured endothelial cell surface. This is Integrin alpha-IIb (ITGA2B) from Homo sapiens (Human).